A 300-amino-acid chain; its full sequence is Lysophosphatidic acid:oleoyl-CoA acyltransferase 1 (300 aa).

Residues 33–53 (LLGILGVKTIIMLPLIMLYLL) traverse the membrane as a helical segment. The HXXXXD motif motif lies at 101–106 (CTSPLD).

Belongs to the 1-acyl-sn-glycerol-3-phosphate acyltransferase family.

The protein localises to the lipid droplet. It localises to the endoplasmic reticulum membrane. It catalyses the reaction a 1-acyl-sn-glycero-3-phosphate + an acyl-CoA = a 1,2-diacyl-sn-glycero-3-phosphate + CoA. It carries out the reaction 1-hexadecanoyl-sn-glycero-3-phosphate + (9Z)-octadecenoyl-CoA = 1-hexadecanoyl-2-(9Z-octadecenoyl)-sn-glycero-3-phosphate + CoA. In terms of biological role, acyl-CoA-dependent lysophosphatidic acid acyltransferase with preference for oleoyl-CoA. Involved in triacylglyceride homeostasis and lipid droplet formation. Involved in vacuolar protein sorting. This Saccharomyces cerevisiae (strain ATCC 204508 / S288c) (Baker's yeast) protein is Lysophosphatidic acid:oleoyl-CoA acyltransferase 1.